Reading from the N-terminus, the 426-residue chain is PHD finger-containing protein 6 (426 aa).

The PHD-type zinc-finger motif lies at 9–59 (RSICETCGHQGWKNSLVTCSKCRIACEHCYCMRESSFETSIHFVCADCSMR). Zn(2+) contacts are provided by Cys-12, Cys-15, Cys-27, Cys-30, His-36, Cys-39, Cys-53, and Cys-56. 2 disordered regions span residues 122–144 (TFRV…TAGF) and 185–205 (RQAS…GDGA).

In terms of assembly, interacts directly with AIPP3/BDT1.

In terms of biological role, together with AIPP3/BDT1, cooperates to form a BAH-PHD bivalent histone reader complex able to read histone H3 lysine 27 trimethylation (H3K27me3) histone marks in order to regulate transcription, especially to prevent early flowering; promotes AIPP3/BDT1 binding to H3K27me3. This Arabidopsis thaliana (Mouse-ear cress) protein is PHD finger-containing protein 6.